We begin with the raw amino-acid sequence, 456 residues long: 3-isopropylmalate dehydratase large subunit (456 aa).

[4Fe-4S] cluster is bound by residues Cys336, Cys396, and Cys399.

The protein belongs to the aconitase/IPM isomerase family. LeuC type 1 subfamily. Heterodimer of LeuC and LeuD. The cofactor is [4Fe-4S] cluster.

The catalysed reaction is (2R,3S)-3-isopropylmalate = (2S)-2-isopropylmalate. It participates in amino-acid biosynthesis; L-leucine biosynthesis; L-leucine from 3-methyl-2-oxobutanoate: step 2/4. Catalyzes the isomerization between 2-isopropylmalate and 3-isopropylmalate, via the formation of 2-isopropylmaleate. This Staphylococcus aureus (strain JH1) protein is 3-isopropylmalate dehydratase large subunit.